The sequence spans 520 residues: Cholesterol side-chain cleavage enzyme, mitochondrial (520 aa).

The transit peptide at 1-39 directs the protein to the mitochondrion; the sequence is MLARGLPFRSALVKACPPLLNTGREGWGHHRVGTGEGAG. A disordered region spans residues 27-47; sequence WGHHRVGTGEGAGISTRTPRP. Position 461 (Cys461) interacts with heme.

Belongs to the cytochrome P450 family. In terms of assembly, interacts with FDX1/adrenodoxin. The cofactor is heme.

Its subcellular location is the mitochondrion inner membrane. The catalysed reaction is 6 reduced [adrenodoxin] + cholesterol + 3 O2 + 6 H(+) = 4-methylpentanal + pregnenolone + 6 oxidized [adrenodoxin] + 4 H2O. The enzyme catalyses 2 reduced [adrenodoxin] + cholesterol + O2 + 2 H(+) = (22R)-hydroxycholesterol + 2 oxidized [adrenodoxin] + H2O. It catalyses the reaction (22R)-hydroxycholesterol + 2 reduced [adrenodoxin] + O2 + 2 H(+) = (20R,22R)-20,22-dihydroxycholesterol + 2 oxidized [adrenodoxin] + H2O. It carries out the reaction (20R,22R)-20,22-dihydroxycholesterol + 2 reduced [adrenodoxin] + O2 + 2 H(+) = 4-methylpentanal + pregnenolone + 2 oxidized [adrenodoxin] + 2 H2O. It participates in lipid metabolism; C21-steroid hormone metabolism. The protein operates within steroid metabolism; cholesterol metabolism. Functionally, a cytochrome P450 monooxygenase that catalyzes the side-chain hydroxylation and cleavage of cholesterol to pregnenolone, the precursor of most steroid hormones. Catalyzes three sequential oxidation reactions of cholesterol, namely the hydroxylation at C22 followed with the hydroxylation at C20 to yield 20R,22R-hydroxycholesterol that is further cleaved between C20 and C22 to yield the C21-steroid pregnenolone and 4-methylpentanal. Mechanistically, uses molecular oxygen inserting one oxygen atom into a substrate and reducing the second into a water molecule. Two electrons are provided by NADPH via a two-protein mitochondrial transfer system comprising flavoprotein FDXR (adrenodoxin/ferredoxin reductase) and nonheme iron-sulfur protein FDX1 or FDX2 (adrenodoxin/ferredoxin). The protein is Cholesterol side-chain cleavage enzyme, mitochondrial of Ovis aries (Sheep).